We begin with the raw amino-acid sequence, 83 residues long: U5-theraphotoxin-Hs1a 1 (83 aa).

The first 21 residues, 1 to 21, serve as a signal peptide directing secretion; the sequence is MKTSMFLTLTGLGLLFVVCYA. The propeptide occupies 22–49; sequence SESEEKEFPKELLSSIFAADSDFKVEER. Intrachain disulfides connect cysteine 51-cysteine 63, cysteine 56-cysteine 68, and cysteine 62-cysteine 75.

Belongs to the neurotoxin 10 (Hwtx-1) family. 51 (Hntx-8) subfamily. Hntx-8 sub-subfamily. In terms of tissue distribution, expressed by the venom gland.

The protein localises to the secreted. In terms of biological role, agglutinates human and mice erythrocytes. This activity can be specifically inhibited by mannosamine. This lectin shows very low toxicity in both mammals and insects. The chain is U5-theraphotoxin-Hs1a 1 from Cyriopagopus schmidti (Chinese bird spider).